Here is a 1299-residue protein sequence, read N- to C-terminus: DNA-directed RNA polymerase subunit beta' (1299 aa).

Zn(2+) contacts are provided by Cys-60, Cys-62, Cys-75, and Cys-78. Residues 385–405 (GRRGRPVTGPGNRPLKSLSDM) are disordered. Mg(2+) is bound by residues Asp-535, Asp-537, and Asp-539. The Zn(2+) site is built by Cys-886, Cys-962, Cys-969, and Cys-972.

The protein belongs to the RNA polymerase beta' chain family. As to quaternary structure, the RNAP catalytic core consists of 2 alpha, 1 beta, 1 beta' and 1 omega subunit. When a sigma factor is associated with the core the holoenzyme is formed, which can initiate transcription. Mg(2+) serves as cofactor. It depends on Zn(2+) as a cofactor.

The enzyme catalyses RNA(n) + a ribonucleoside 5'-triphosphate = RNA(n+1) + diphosphate. Functionally, DNA-dependent RNA polymerase catalyzes the transcription of DNA into RNA using the four ribonucleoside triphosphates as substrates. The protein is DNA-directed RNA polymerase subunit beta' of Streptomyces coelicolor (strain ATCC BAA-471 / A3(2) / M145).